The sequence spans 141 residues: Large ribosomal subunit protein uL16 (141 aa).

The span at 1–19 (MLMPKKTKYRKQQKGRNRG) shows a compositional bias: basic residues. Positions 1 to 22 (MLMPKKTKYRKQQKGRNRGKAY) are disordered.

It belongs to the universal ribosomal protein uL16 family. Part of the 50S ribosomal subunit.

Its function is as follows. Binds 23S rRNA and is also seen to make contacts with the A and possibly P site tRNAs. This Nitratiruptor sp. (strain SB155-2) protein is Large ribosomal subunit protein uL16.